The chain runs to 273 residues: Protein N-terminal and lysine N-methyltransferase EFM7 (273 aa).

A disordered region spans residues 1 to 32 (MSDIEDLASGGLFDEPKDFYKPEEQPGSDSYA). The span at 14 to 24 (DEPKDFYKPEE) shows a compositional bias: basic and acidic residues. Residues Trp65, 92-94 (GAG), Asp114, Trp161, and Ser183 contribute to the S-adenosyl-L-methionine site.

It belongs to the class I-like SAM-binding methyltransferase superfamily. EFM7 family.

It localises to the cytoplasm. Functionally, S-adenosyl-L-methionine-dependent protein methyltransferase that trimethylates the N-terminal glycine 'Gly-2' of elongation factor 1-alpha, before also catalyzing the mono- and dimethylation of 'Lys-3'. In Yarrowia lipolytica (strain CLIB 122 / E 150) (Yeast), this protein is Protein N-terminal and lysine N-methyltransferase EFM7.